Reading from the N-terminus, the 173-residue chain is Interferon gamma (173 aa).

Residues 1 to 22 form the signal peptide; it reads MNATHCILALQLCLLAISGCSS. Gln-23 carries the pyrrolidone carboxylic acid modification. Residues Asn-38 and Asn-105 are each glycosylated (N-linked (GlcNAc...) asparagine).

Belongs to the type II (or gamma) interferon family. Homodimer. Interacts with IFNGR1 (via extracellular domain); this interaction promotes IFNGR1 dimerization. As to expression, released primarily from activated T lymphocytes.

It is found in the secreted. In terms of biological role, type II interferon produced by immune cells such as T-cells and NK cells that plays crucial roles in antimicrobial, antiviral, and antitumor responses by activating effector immune cells and enhancing antigen presentation. Primarily signals through the JAK-STAT pathway after interaction with its receptor IFNGR1 to affect gene regulation. Upon IFNG binding, IFNGR1 intracellular domain opens out to allow association of downstream signaling components JAK2, JAK1 and STAT1, leading to STAT1 activation, nuclear translocation and transcription of IFNG-regulated genes. Many of the induced genes are transcription factors such as IRF1 that are able to further drive regulation of a next wave of transcription. Plays a role in class I antigen presentation pathway by inducing a replacement of catalytic proteasome subunits with immunoproteasome subunits. In turn, increases the quantity, quality, and repertoire of peptides for class I MHC loading. Increases the efficiency of peptide generation also by inducing the expression of activator PA28 that associates with the proteasome and alters its proteolytic cleavage preference. Up-regulates as well MHC II complexes on the cell surface by promoting expression of several key molecules such as cathepsins B/CTSB, H/CTSH, and L/CTSL. Participates in the regulation of hematopoietic stem cells during development and under homeostatic conditions by affecting their development, quiescence, and differentiation. The sequence is that of Interferon gamma (IFNG) from Meriones unguiculatus (Mongolian jird).